Here is a 329-residue protein sequence, read N- to C-terminus: tRNA-modifying protein YgfZ (329 aa).

Trp-32 and Trp-190 together coordinate folate.

This sequence belongs to the tRNA-modifying YgfZ family.

It is found in the cytoplasm. Its function is as follows. Folate-binding protein involved in regulating the level of ATP-DnaA and in the modification of some tRNAs. It is probably a key factor in regulatory networks that act via tRNA modification, such as initiation of chromosomal replication. The protein is tRNA-modifying protein YgfZ of Photobacterium profundum (strain SS9).